The primary structure comprises 1135 residues: Nonribosomal peptide synthetase 9 (1135 aa).

Residues 23–77 (TKQITTATYIKLAWAVVISCNTGSNDTVFGITVNGRGAPIDGAGEMTGATIATIP) form a condensation 1 region. Residues 177–562 (SYAELIRSAN…RRIDEIQEAT (386 aa)) form an adenylation region. The segment at 485–507 (GPSPPVGRSSSNRAGSGRCAMGS) is disordered. Residues 491–502 (GRSSSNRAGSGR) show a composition bias toward low complexity. In terms of domain architecture, Carrier spans 672 to 748 (APSNRVEQDL…AIANKIGDVQ (77 aa)). S709 is subject to O-(pantetheine 4'-phosphoryl)serine. Positions 746-999 (DVQRAAIKLV…TTLWPVVAQV (254 aa)) are condensation 2.

This sequence belongs to the NRP synthetase family.

Functionally, nonribosomal peptide synthesis (NRPS) is a key mechanism responsible for the biosynthesis of bioactive metabolites which are potentially contributing to organismal virulence. This Aspergillus fumigatus (strain ATCC MYA-4609 / CBS 101355 / FGSC A1100 / Af293) (Neosartorya fumigata) protein is Nonribosomal peptide synthetase 9 (NRPS9).